A 593-amino-acid polypeptide reads, in one-letter code: ESX-1 secretion system protein EccCb1 (593 aa).

FtsK domains follow at residues 66–260 (RQEV…NETQ) and 350–546 (QVPL…EKND). Residues 85 to 92 (GAPQTGKS) and 377 to 384 (GAPKSGKT) each bind ATP.

Part of the ESX-1 / type VII secretion system (T7SS), which is composed of cytosolic and membrane components. The ESX-1 membrane complex is composed of EccB1, EccCa1, EccCb1, EccD1 and EccE1.

Its subcellular location is the cytoplasm. In terms of biological role, part of the ESX-1 / type VII specialized secretion system (T7SS), which exports several proteins including EsxA and EsxB. Plays a role in DNA conjugation, in both donor and recipient strains. This is ESX-1 secretion system protein EccCb1 from Mycolicibacterium smegmatis (strain ATCC 700084 / mc(2)155) (Mycobacterium smegmatis).